The primary structure comprises 168 residues: Alkyl hydroperoxide reductase C (168 aa).

One can recognise a Thioredoxin domain in the interval E1–Y138. The Cysteine sulfenic acid (-SOH) intermediate role is filled by C28.

This sequence belongs to the peroxiredoxin family. AhpC/Prx1 subfamily. As to quaternary structure, homodimer; disulfide-linked, upon oxidation. 5 homodimers assemble to form a ring-like decamer.

The protein localises to the cytoplasm. The catalysed reaction is a hydroperoxide + NADH + H(+) = an alcohol + NAD(+) + H2O. Its function is as follows. Thiol-specific peroxidase that catalyzes the reduction of hydrogen peroxide and organic hydroperoxides to water and alcohols, respectively. Plays a role in cell protection against oxidative stress by detoxifying peroxides. This Ferdinandcohnia aciditolerans (strain JCM 32973 / CCTCC AB 2017280 / YN-1) (Bacillus aciditolerans) protein is Alkyl hydroperoxide reductase C.